The sequence spans 360 residues: 4-hydroxy-3-methylbut-2-en-1-yl diphosphate synthase (flavodoxin) (360 aa).

Residues Cys-265, Cys-268, Cys-300, and Glu-307 each contribute to the [4Fe-4S] cluster site.

It belongs to the IspG family. [4Fe-4S] cluster serves as cofactor.

It catalyses the reaction (2E)-4-hydroxy-3-methylbut-2-enyl diphosphate + oxidized [flavodoxin] + H2O + 2 H(+) = 2-C-methyl-D-erythritol 2,4-cyclic diphosphate + reduced [flavodoxin]. It functions in the pathway isoprenoid biosynthesis; isopentenyl diphosphate biosynthesis via DXP pathway; isopentenyl diphosphate from 1-deoxy-D-xylulose 5-phosphate: step 5/6. Its function is as follows. Converts 2C-methyl-D-erythritol 2,4-cyclodiphosphate (ME-2,4cPP) into 1-hydroxy-2-methyl-2-(E)-butenyl 4-diphosphate. The sequence is that of 4-hydroxy-3-methylbut-2-en-1-yl diphosphate synthase (flavodoxin) from Brevibacillus brevis (strain 47 / JCM 6285 / NBRC 100599).